A 491-amino-acid polypeptide reads, in one-letter code: MNTQQLAKLRSIVPEMRRVRHIHFVGIGGAGMGGIAEVLANEGYQISGSDLAPNPVTQQLMNLGATIYFNHRPENVRDASVVVVSSAISADNPEIVAAHEARIPVIRRAEMLAELMRFRHGIAIAGTHGKTTTTAMVSSIYAEAGLDPTFVNGGLVKAAGVHARLGHGRYLIAEADESDASFLHLQPMVAIVTNIEADHMDTYQGDFENLKQTFINFLHNLPFYGRAVMCVDDPVIRELLPRVGRQTTTYGFSEDADVRVEDYQQIGPQGHFTLLRQDKEPMRVTLNAPGRHNALNAAAAVAVATEEGIDDEAILRALESFQGTGRRFDFLGEFPLEPVNGKSGTAMLVDDYGHHPTEVDATIKAARAGWPDKKLVMLFQPHRFTRTRDLYDDFANVLTQVDTLLMLEVYPAGEAPIPGADSRSLCRTIRGRGKIDPILVPDPAQVAEMLAPVLTGNDLILVQGAGNIGKIARSLAEIKLKPQTPEEEQHD.

An ATP-binding site is contributed by 126-132 (GTHGKTT).

The protein belongs to the MurCDEF family.

It localises to the cytoplasm. The catalysed reaction is UDP-N-acetyl-alpha-D-muramate + L-alanine + ATP = UDP-N-acetyl-alpha-D-muramoyl-L-alanine + ADP + phosphate + H(+). It participates in cell wall biogenesis; peptidoglycan biosynthesis. Functionally, cell wall formation. This is UDP-N-acetylmuramate--L-alanine ligase from Escherichia coli O1:K1 / APEC.